We begin with the raw amino-acid sequence, 776 residues long: MIRVYLIILMHLVIGLTQNNSTTPSPIITSSNSSVLVFEISSKMKMIEKKLEANTVHVLRLELDQSFILDLTKVAAEIVDSSKYSKEDGVILEVTVSNGRDSFLLKLPTVYPNLKLYTDGKLLNPLVEQDFGAHRKRHRIGDPHFHQNLIVTVQSRLNADIDYRLHVTHLDRAQYDFLKFKTGQTTKTLSNQKLTFVKPIGFFLNCSEQNISQFHVTLYSEDDICANLITVPANESIYDRSVISDKTHNRRVLSFTKRADIFFTETEISMFKSFRIFVFIAPDDSGCSTNTSRKSFNEKKKISFEFKKLENQSYAVPTALMMIFLTTPCLLFLPIVINIIKNSRKLAPSQSNLISFSPVPSEQRDMDLSHDEQQNTSSELENNGEIPAAENQIVEEITAENQETSVEEGNREIQVKIPLKQDSLSLHGQMLQYPVAIILPVLMHTAIEFHKWTTSTMANRDEMCFHNHACARPLGELRAWNNIITNIGYTLYGAIFIVLSICRRGRHEYSHVFGTYECTLLDVTIGVFMVLQSIASATYHICPSDVAFQFDTPCIQVICGLLMVRQWFVRHESPSPAYTNILLVGVVSLNFLISAFSKTSYVRFIIAVIHVIVVGSICLAKERSLGSEKLKTRFFIMAFSMGNFAAIVMYLTLSAFHLNQIATYCFIINCIMYLMYYGCMKVLHSERITSKAKLCGALSLLAWAVAGFFFFQDDTDWTRSAAASRALNKPCLLLGFFGSHDLWHIFGALAGLFTFIFVSFVDDDLINTRKTSINIF.

The signal sequence occupies residues 1 to 17 (MIRVYLIILMHLVIGLT). Over 18–319 (QNNSTTPSPI…ENQSYAVPTA (302 aa)) the chain is Extracellular. N-linked (GlcNAc...) asparagine glycosylation is found at Asn19, Asn20, Asn32, Asn205, Asn210, Asn234, Asn290, and Asn311. The involved in dsRNA-binding stretch occupies residues 22–312 (TTPSPIITSS…SFEFKKLENQ (291 aa)). A helical membrane pass occupies residues 320-340 (LMMIFLTTPCLLFLPIVINII). At 341–429 (KNSRKLAPSQ…KQDSLSLHGQ (89 aa)) the chain is on the cytoplasmic side. Positions 360–390 (PSEQRDMDLSHDEQQNTSSELENNGEIPAAE) are disordered. Over residues 362–373 (EQRDMDLSHDEQ) the composition is skewed to basic and acidic residues. Residues 430–450 (MLQYPVAIILPVLMHTAIEFH) traverse the membrane as a helical segment. Residues 451-481 (KWTTSTMANRDEMCFHNHACARPLGELRAWN) lie on the Extracellular side of the membrane. A helical membrane pass occupies residues 482-502 (NIITNIGYTLYGAIFIVLSIC). Topologically, residues 503-510 (RRGRHEYS) are cytoplasmic. Residues 511 to 531 (HVFGTYECTLLDVTIGVFMVL) form a helical membrane-spanning segment. Residues 532–543 (QSIASATYHICP) lie on the Extracellular side of the membrane. Residues 544 to 564 (SDVAFQFDTPCIQVICGLLMV) form a helical membrane-spanning segment. At 565 to 575 (RQWFVRHESPS) the chain is on the cytoplasmic side. The helical transmembrane segment at 576–596 (PAYTNILLVGVVSLNFLISAF) threads the bilayer. The Extracellular portion of the chain corresponds to 597–599 (SKT). Residues 600–620 (SYVRFIIAVIHVIVVGSICLA) traverse the membrane as a helical segment. Residues 621 to 633 (KERSLGSEKLKTR) lie on the Cytoplasmic side of the membrane. The helical transmembrane segment at 634 to 654 (FFIMAFSMGNFAAIVMYLTLS) threads the bilayer. Over 655–659 (AFHLN) the chain is Extracellular. The chain crosses the membrane as a helical span at residues 660–680 (QIATYCFIINCIMYLMYYGCM). Residues 681-691 (KVLHSERITSK) lie on the Cytoplasmic side of the membrane. Residues 692-712 (AKLCGALSLLAWAVAGFFFFQ) form a helical membrane-spanning segment. Topologically, residues 713-741 (DDTDWTRSAAASRALNKPCLLLGFFGSHD) are extracellular. A helical membrane pass occupies residues 742–762 (LWHIFGALAGLFTFIFVSFVD). At 763-776 (DDLINTRKTSINIF) the chain is on the cytoplasmic side.

The protein belongs to the SID1 family. As to quaternary structure, may self-associate to form multimers. Expressed in most non-neuronal cells, including body wall muscle cells.

The protein resides in the cell membrane. Functionally, plays a role in RNA-mediated gene silencing by acting cell-autonomously as a channel for the transport of double-stranded RNA (dsRNA) between cells. Mediates the spread of dsRNA and subsequent silencing of genes in cells distant from the site of dsRNA introduction. Selective for dsRNA. Preferentially binds long dsRNA, from 50 base pairs up to 700. Short 20 base-pair long molecules are not bound. May also bind dsDNA, but with lower affinity. Binding may be sequence-independent. Required for avoidance behavior induced by small RNAs derived from pathogenic bacteria such as P.aeruginosa. The polypeptide is Systemic RNA interference defective protein 1 (Caenorhabditis elegans).